Consider the following 170-residue polypeptide: Adenine phosphoribosyltransferase (170 aa).

This sequence belongs to the purine/pyrimidine phosphoribosyltransferase family. As to quaternary structure, homodimer.

The protein localises to the cytoplasm. It carries out the reaction AMP + diphosphate = 5-phospho-alpha-D-ribose 1-diphosphate + adenine. It participates in purine metabolism; AMP biosynthesis via salvage pathway; AMP from adenine: step 1/1. Functionally, catalyzes a salvage reaction resulting in the formation of AMP, that is energically less costly than de novo synthesis. This is Adenine phosphoribosyltransferase from Enterococcus faecalis (strain ATCC 700802 / V583).